A 284-amino-acid polypeptide reads, in one-letter code: L-ribulose-5-phosphate 3-epimerase UlaE (284 aa).

The protein belongs to the L-ribulose-5-phosphate 3-epimerase family.

The catalysed reaction is L-ribulose 5-phosphate = L-xylulose 5-phosphate. It functions in the pathway cofactor degradation; L-ascorbate degradation; D-xylulose 5-phosphate from L-ascorbate: step 3/4. Its function is as follows. Catalyzes the isomerization of L-xylulose-5-phosphate to L-ribulose-5-phosphate. Is involved in the anaerobic L-ascorbate utilization. The sequence is that of L-ribulose-5-phosphate 3-epimerase UlaE from Escherichia coli O127:H6 (strain E2348/69 / EPEC).